The chain runs to 241 residues: Ribosomal RNA small subunit methyltransferase G (241 aa).

S-adenosyl-L-methionine is bound by residues glycine 96, phenylalanine 101, 119–121, 147–148, and arginine 166; these read EAS and VE.

The protein belongs to the methyltransferase superfamily. RNA methyltransferase RsmG family.

Its subcellular location is the cytoplasm. The enzyme catalyses guanosine(527) in 16S rRNA + S-adenosyl-L-methionine = N(7)-methylguanosine(527) in 16S rRNA + S-adenosyl-L-homocysteine. Functionally, specifically methylates the N7 position of guanine in position 527 of 16S rRNA. This is Ribosomal RNA small subunit methyltransferase G from Syntrophus aciditrophicus (strain SB).